Reading from the N-terminus, the 122-residue chain is S-adenosylmethionine decarboxylase proenzyme (122 aa).

Serine 69 (schiff-base intermediate with substrate; via pyruvic acid) is an active-site residue. Pyruvic acid (Ser); by autocatalysis is present on serine 69. Histidine 74 (proton acceptor; for processing activity) is an active-site residue. The Proton donor; for catalytic activity role is filled by cysteine 89.

Belongs to the prokaryotic AdoMetDC family. Type 1 subfamily. Heterotetramer of two alpha and two beta chains arranged as a dimer of alpha/beta heterodimers. Pyruvate serves as cofactor. Is synthesized initially as an inactive proenzyme. Formation of the active enzyme involves a self-maturation process in which the active site pyruvoyl group is generated from an internal serine residue via an autocatalytic post-translational modification. Two non-identical subunits are generated from the proenzyme in this reaction, and the pyruvate is formed at the N-terminus of the alpha chain, which is derived from the carboxyl end of the proenzyme. The post-translation cleavage follows an unusual pathway, termed non-hydrolytic serinolysis, in which the side chain hydroxyl group of the serine supplies its oxygen atom to form the C-terminus of the beta chain, while the remainder of the serine residue undergoes an oxidative deamination to produce ammonia and the pyruvoyl group blocking the N-terminus of the alpha chain.

It carries out the reaction S-adenosyl-L-methionine + H(+) = S-adenosyl 3-(methylsulfanyl)propylamine + CO2. The protein operates within amine and polyamine biosynthesis; S-adenosylmethioninamine biosynthesis; S-adenosylmethioninamine from S-adenosyl-L-methionine: step 1/1. Catalyzes the decarboxylation of S-adenosylmethionine to S-adenosylmethioninamine (dcAdoMet), the propylamine donor required for the synthesis of the polyamines spermine and spermidine from the diamine putrescine. In Saccharolobus islandicus (strain L.S.2.15 / Lassen #1) (Sulfolobus islandicus), this protein is S-adenosylmethionine decarboxylase proenzyme.